Here is a 60-residue protein sequence, read N- to C-terminus: Large ribosomal subunit protein bL32c (60 aa).

Belongs to the bacterial ribosomal protein bL32 family.

Its subcellular location is the plastid. It is found in the chloroplast. This Psilotum nudum (Whisk fern) protein is Large ribosomal subunit protein bL32c.